Reading from the N-terminus, the 547-residue chain is Sodium/hydrogen exchanger 9B2 (547 aa).

Residues 1–68 (MEDEDKTAEC…PQDSPTEPNG (68 aa)) form a disordered region. Residues 1 to 86 (MEDEDKTAEC…ACPPRGCLAR (86 aa)) lie on the Cytoplasmic side of the membrane. A compositionally biased stretch (basic and acidic residues) spans 23-45 (APPHHELQEERVMSLRGTDRSEP). Ser49 is modified (phosphoserine). Residues 87 to 104 (VITNGTMVVLLWAMVWSV) traverse the membrane as a helical segment. At 105–113 (TGPECLPGG) the chain is on the extracellular side. The helical transmembrane segment at 114–133 (NLFGIIILFYCSITGGKLFG) threads the bilayer. At 134–144 (LIKFPTLPPLP) the chain is on the cytoplasmic side. Residues 145-161 (PLLGMLLAGFLLRNIPV) form a helical membrane-spanning segment. Residues 162-171 (INDSVRIQHK) lie on the Extracellular side of the membrane. The chain crosses the membrane as a helical span at residues 172-189 (WSSSLRSIALSVILVRAG). The Cytoplasmic segment spans residues 190–200 (LGLDSKALRKL). The helical transmembrane segment at 201-227 (KGVCVRLAMGPCIVEACASAILSHFLM) threads the bilayer. Over 228-233 (GLPWQW) the chain is Extracellular. A helical membrane pass occupies residues 234 to 242 (GFILGFVVG). Residues 243–270 (AVSPAVVVPSMLLLQEGGYGVGKGIPTL) lie on the Cytoplasmic side of the membrane. Residues Val244, Gly275, Asp278, and Asp279 each contribute to the Na(+) site. Residues 271-290 (LMAAGSFDDILAITGFNTCL) traverse the membrane as a helical segment. Topologically, residues 291 to 300 (GVAFSTGSTV) are extracellular. The chain crosses the membrane as a helical span at residues 301-324 (FNIFRGILEVVIGVAAGSFLGFFI). Residues 325–339 (QYFPSRDQDNLVWKR) are Cytoplasmic-facing. A helical transmembrane segment spans residues 340-357 (AFLVLGFAVLAVFSSVYF). Over 358–361 (SFPG) the chain is Extracellular. Residues 362–373 (SGGLCTLVMAFL) traverse the membrane as a helical segment. Residues 374–390 (AGMRWTDKKSEVEKVIA) lie on the Cytoplasmic side of the membrane. Residues 391–411 (VTWDVFQPLLFGLIGAEVSIV) traverse the membrane as a helical segment. Residues 412–417 (SLRAET) lie on the Extracellular side of the membrane. Residues 418–440 (VGLCVATLSIAVLIRILTTFLMV) form a helical membrane-spanning segment. Topologically, residues 441–461 (CFAGFNIKEKIFISFAWLPKA) are cytoplasmic. The helical transmembrane segment at 462-473 (TVQAAIGSVALD) threads the bilayer. The Extracellular segment spans residues 474–486 (TARSHGEKQLEDY). A helical membrane pass occupies residues 487-509 (GMDVLTVAFLAILITAPIGSLLI). Topologically, residues 510–547 (GLLGPRVLQKSEHRTEEEVQGETSAHIQRKPEDSITEA) are cytoplasmic. Residues 522-547 (HRTEEEVQGETSAHIQRKPEDSITEA) are disordered. Residues 538 to 547 (RKPEDSITEA) are compositionally biased toward basic and acidic residues.

It belongs to the monovalent cation:proton antiporter 1 (CPA1) transporter (TC 2.A.36) family. As to quaternary structure, homodimer; dimerization is essential for SLC9B2 activity. Lipids seem to play a role in the stabilization of the dimerization subdomain. As to expression, widely expressed. However expression seems to be restricted to specific cell types within individual organs, e.g. osteoclasts in the bone, distal tubules of the kidney or beta-cells of Langerhans islets. In sperm specifically present in the principal piece of sperm tail (at protein level).

The protein localises to the cell membrane. The protein resides in the mitochondrion membrane. It is found in the endosome membrane. It localises to the lysosome membrane. Its subcellular location is the recycling endosome membrane. The protein localises to the cytoplasmic vesicle. The protein resides in the secretory vesicle. It is found in the synaptic vesicle membrane. It localises to the cell projection. Its subcellular location is the cilium. The protein localises to the flagellum membrane. The protein resides in the basolateral cell membrane. It is found in the apical cell membrane. It carries out the reaction Na(+)(in) + H(+)(out) = Na(+)(out) + H(+)(in). The catalysed reaction is Li(+)(out) + H(+)(in) = Li(+)(in) + H(+)(out). The enzyme catalyses Li(+)(in) + Na(+)(out) = Li(+)(out) + Na(+)(in). With respect to regulation, allosterically inhibited by the N-terminal domain. Inhibited by phloretin. Its function is as follows. Electroneutral Na(+) Li(+)/H(+) antiporter that extrudes Na(+) or Li(+) in exchange for external protons across the membrane. Uses the proton gradient/membrane potential to extrude sodium. Contributes to the regulation of intracellular pH and sodium homeostasis. Also able to mediate Na(+)/Li(+) antiporter activity in kidney. May play a physiological role in renal tubular function and blood pressure homeostasis. Plays an important role for insulin secretion and clathrin-mediated endocytosis in beta-cells. Involved in sperm motility and fertility. It is controversial whether SLC9B2 plays a role in osteoclast differentiation or not. The protein is Sodium/hydrogen exchanger 9B2 of Mus musculus (Mouse).